A 272-amino-acid chain; its full sequence is Tryptophan synthase alpha chain (272 aa).

Catalysis depends on proton acceptor residues glutamate 49 and glutamate 60.

Belongs to the TrpA family. Tetramer of two alpha and two beta chains.

The catalysed reaction is (1S,2R)-1-C-(indol-3-yl)glycerol 3-phosphate + L-serine = D-glyceraldehyde 3-phosphate + L-tryptophan + H2O. The protein operates within amino-acid biosynthesis; L-tryptophan biosynthesis; L-tryptophan from chorismate: step 5/5. The alpha subunit is responsible for the aldol cleavage of indoleglycerol phosphate to indole and glyceraldehyde 3-phosphate. This Legionella pneumophila (strain Corby) protein is Tryptophan synthase alpha chain.